The primary structure comprises 148 residues: Ribosome maturation factor RimP (148 aa).

It belongs to the RimP family.

It is found in the cytoplasm. Its function is as follows. Required for maturation of 30S ribosomal subunits. This is Ribosome maturation factor RimP from Nautilia profundicola (strain ATCC BAA-1463 / DSM 18972 / AmH).